The primary structure comprises 437 residues: Enolase (437 aa).

(2R)-2-phosphoglycerate is bound at residue Q162. The Proton donor role is filled by E204. Mg(2+) is bound by residues D251, E297, and D324. (2R)-2-phosphoglycerate contacts are provided by K349, R378, S379, and K400. The active-site Proton acceptor is K349.

This sequence belongs to the enolase family. Mg(2+) is required as a cofactor.

It localises to the cytoplasm. Its subcellular location is the secreted. The protein localises to the cell surface. It catalyses the reaction (2R)-2-phosphoglycerate = phosphoenolpyruvate + H2O. Its pathway is carbohydrate degradation; glycolysis; pyruvate from D-glyceraldehyde 3-phosphate: step 4/5. In terms of biological role, catalyzes the reversible conversion of 2-phosphoglycerate (2-PG) into phosphoenolpyruvate (PEP). It is essential for the degradation of carbohydrates via glycolysis. This Chlorobium phaeovibrioides (strain DSM 265 / 1930) (Prosthecochloris vibrioformis (strain DSM 265)) protein is Enolase.